Here is a 71-residue protein sequence, read N- to C-terminus: Frenatin 2.3S (71 aa).

A signal peptide spans 1–22; the sequence is MAFLKKSLFLVLFLGLVSLSMG. The disordered stretch occupies residues 21–56; the sequence is MGEREKREEEEEEEEENKEEEANEEGKGESEEKRGL. A propeptide spanning residues 23-54 is cleaved from the precursor; the sequence is EREKREEEEEEEEENKEEEANEEGKGESEEKR. Acidic residues predominate over residues 28-43; it reads EEEEEEEEENKEEEAN. The span at 44–55 shows a compositional bias: basic and acidic residues; sequence EEGKGESEEKRG. Residue Gly-70 is modified to Glycine amide; in Frenatin 2.1S.

This sequence belongs to the frog skin active peptide (FSAP) family. Frenatin subfamily. Frenatin 2.3S is not amidated. In terms of tissue distribution, expressed by the skin glands.

Its subcellular location is the secreted. Functionally, antimicrobial peptide with potent activity against Gram-negative bacteria. Shows immunostimulatory actions both in vitro and in vivo. In vitro, is cytotoxic to non-small cell lung adenocarcinoma A549 cells. Also, stimulates production of pro-inflammatory cytokines by mouse peritoneal macrophages and down-regulates production of the anti-inflammatory cytokine IL-10 by lipopolysaccharide (LPS)-stimulated cells. In vivo, intraperitoneal injection in mice enhances the activation state and homing capacity of Th1 type lymphocytes and promotes the recruitment, activation and tumoricidal capacities of peritoneal NK cells. Has a very weak activity in stimulation of insulin release and a weak hemolytic activity. Antimicrobial peptide with potent activity against some Gram-positive and Gram-negative bacteria. Has a multifunctional mode of action. It displays depolarization and bacterial cell leakage, and can also internalize into bacterial cells and alter specific gene expression involved in bacterial resistance mechanisms. Does not agglutinate bacteria and lipid vesicles, even a high concentrations. Also displays moderate cellular protection against yellow fever virus (YFV)-infected Vero cells without causing significant cytotoxicity. Shows a weak hemolytic activity, and is not cytotoxic to monocytes. Frenatin 2.3S (version without Gly-71) shows no or very weak antibacterial activity, shows no or very weak cytotoxicity to lung adenocarcinoma A549 cells and shows very weak hemolysis. It only stimulates production of pro-inflammatory cytokines IL-23 (but not IL-1beta and TNF-alpha) by mouse peritoneal macrophages and has no effect on the production of the anti-inflammatory cytokine IL-10. Frenatin 2.3S (version without Gly-71) very weakly stimulates insulin release. This Sphaenorhynchus lacteus (Orinoco lime treefrog) protein is Frenatin 2.3S.